The primary structure comprises 347 residues: Very-long-chain 3-oxoacyl-CoA reductase (347 aa).

The helical transmembrane segment at 20-40 threads the bilayer; that stretch reads LLWVVFGLGVLKCTTLSLRFL. The NADP(+) site is built by Val66, Asp120, Asn147, Tyr223, Lys227, Val256, and Ser258. Tyr223 serves as the catalytic Proton donor. The active-site Lowers pKa of active site Tyr is Lys227.

The protein belongs to the short-chain dehydrogenases/reductases (SDR) family. As to quaternary structure, interacts with the fatty acid elongation system components ELO3 and TSC13.

The protein localises to the endoplasmic reticulum membrane. The catalysed reaction is a very-long-chain (3R)-3-hydroxyacyl-CoA + NADP(+) = a very-long-chain 3-oxoacyl-CoA + NADPH + H(+). It functions in the pathway lipid metabolism; fatty acid biosynthesis. Component of the microsomal membrane bound fatty acid elongation system, which produces the 26-carbon very long-chain fatty acids (VLCFA) from palmitate. Catalyzes the reduction of the 3-ketoacyl-CoA intermediate that is formed in each cycle of fatty acid elongation. VLCFAs serve as precursors for ceramide and sphingolipids. This Saccharomyces cerevisiae (strain RM11-1a) (Baker's yeast) protein is Very-long-chain 3-oxoacyl-CoA reductase.